We begin with the raw amino-acid sequence, 254 residues long: Probable transcriptional regulator ycf27 (254 aa).

The region spanning 16-129 is the Response regulatory domain; the sequence is KVLIVDDEAS…ELEARIRAVL (114 aa). 4-aspartylphosphate is present on Asp-65. Positions 85–103 form a DNA-binding region, H-T-H motif; sequence DVPIIMLTALGDVADRITG. A DNA-binding region (ompR/PhoB-type) is located at residues 144 to 245; sequence SGIINFNFLT…ARGTGYLFQR (102 aa).

Its subcellular location is the plastid. The protein resides in the chloroplast. Its function is as follows. Probable promoter-specific protein mediating the interaction between DNA and RNA polymerase. The chain is Probable transcriptional regulator ycf27 (ycf27) from Guillardia theta (Cryptophyte).